The sequence spans 146 residues: MNLTDYVKTVSIEDFGWKFKHQALWNKRLRTTGGRFFPKDGHLDFNPKLYEEHGLETFRKIVRHELCHYHLYFQGKGCKHGDRDFKDLLARVDGLRYAPKMRNQAENYFLYQCQSCGHTYRRKRRVNTQKFGCGLCQGKLIFLNQS.

The SprT-like domain occupies 6 to 141; that stretch reads YVKTVSIEDF…GCGLCQGKLI (136 aa). Zn(2+) is bound at residue His64. Glu65 is a catalytic residue. Zn(2+) is bound at residue His68.

This sequence belongs to the SprT family. Zn(2+) serves as cofactor.

The protein resides in the cytoplasm. The sequence is that of Protein SprT-like from Streptococcus thermophilus (strain CNRZ 1066).